A 259-amino-acid chain; its full sequence is Protein FAM220A (259 aa).

The interval 29–66 is disordered; it reads GLKRRSEKRNPSPSDVPSWTDQPVADTHGKSRAMAAAS. Residues 39–49 are compositionally biased toward polar residues; the sequence is PSPSDVPSWTD.

Interacts with transcriptional activator STAT3; the interaction occurs in both the nucleus and the cytoplasm, is enhanced by IL6 and promotes STAT3 dephosphorylation, leading to negative regulation of STAT3 transcriptional activator activity. Can interact with both unphosphorylated and phosphorylated STAT3 but interacts preferentially with phosphorylated STAT3 in the nucleus. Interacts with protein phosphatase PTPN2/TC45; this promotes interaction of PTPN2 with STAT3, leading to dephosphorylation of STAT3 by PTPN2.

It is found in the nucleus. Its subcellular location is the cytoplasm. The protein localises to the cytoplasmic vesicle. It localises to the secretory vesicle. The protein resides in the acrosome. Promotes dephosphorylation of transcriptional activator STAT3 by interacting with both STAT3 and protein phosphatase PTPN2. This promotes interaction of PTPN2 with STAT3 and mediates STAT3 dephosphorylation by PTPN2, leading to negative regulation of STAT3 transcriptional activator activity. May be required for spermiogenesis or sperm function. The protein is Protein FAM220A (Fam220a) of Rattus norvegicus (Rat).